A 24-amino-acid chain; its full sequence is Cytochrome c3-2 (24 aa).

Positions 1-24 are disordered; it reads GNAPAADMVLKAPGDAKMTKTAVP.

Post-translationally, binds 4 heme groups per subunit.

The protein resides in the periplasm. Participates in sulfate respiration coupled with phosphorylation by transferring electrons from the enzyme dehydrogenase to ferredoxin. This is Cytochrome c3-2 from Nitratidesulfovibrio vulgaris (Desulfovibrio vulgaris).